The primary structure comprises 377 residues: Meiotic driver cw9 (377 aa).

Disordered regions lie at residues 1 to 49 (MKNK…DLNN) and 64 to 100 (NKST…GTTD). Over residues 11–29 (SMDEMSAKNDNEIDLEKGP) the composition is skewed to basic and acidic residues. Helical transmembrane passes span 105–125 (FLIK…PAVC), 142–162 (WTLF…LTYF), 172–192 (VTII…AQCV), 218–238 (VVII…RSKF), 252–272 (CSIS…FWTL), 276–296 (FSGL…TKGL), and 306–326 (ATGY…LFFY).

This sequence belongs to the WTF family. In terms of assembly, homomer. Forms protein aggregates. The two isoforms can interact with each other and with themselves. High sequence similarity is required for their interaction.

The protein resides in the spore membrane. The protein localises to the vacuole membrane. It localises to the ascus epiplasm. It is found in the cytoplasm. Its subcellular location is the endoplasmic reticulum membrane. Functionally, promotes unequal transmission of alleles from the parental zygote to progeny spores by acting as poison/antidote system where the poison and antidote proteins are produced from the same locus; the poison component is trans-acting and targets all spores within an ascus whereas the antidote component is spore-specific, leading to poisoning of all progeny that do not inherit the allele. In terms of biological role, localizes isoform 2 to the vacuole thereby facilitating its degradation. Forms toxic aggregates that disrupt spore maturation. The polypeptide is Meiotic driver cw9 (Schizosaccharomyces pombe (Fission yeast)).